Here is a 591-residue protein sequence, read N- to C-terminus: V-type ATP synthase alpha chain (591 aa).

233–240 lines the ATP pocket; the sequence is GPFGAGKT.

The protein belongs to the ATPase alpha/beta chains family.

The enzyme catalyses ATP + H2O + 4 H(+)(in) = ADP + phosphate + 5 H(+)(out). Functionally, produces ATP from ADP in the presence of a proton gradient across the membrane. The V-type alpha chain is a catalytic subunit. The polypeptide is V-type ATP synthase alpha chain (Streptococcus pneumoniae (strain ATCC 700669 / Spain 23F-1)).